Here is a 163-residue protein sequence, read N- to C-terminus: MSQFSHFNEQGRAKMVDISDKSSTMRTAVAASSVRMIKEVFHKIEQREIGKGDVLSVAQVAGIMAAKQTSTIIPMCHPLALKGVDISFDWEEDGNAHILNIQVQVKTKGSTGVEMEALTSASVCALTVYDMCKAIDKGMIIGPTYLIEKTGGKNGDFHRASDI.

Substrate is bound by residues 75–77 (MCH) and 115–116 (ME). The active site involves Asp130.

Belongs to the MoaC family. In terms of assembly, homohexamer; trimer of dimers.

The enzyme catalyses (8S)-3',8-cyclo-7,8-dihydroguanosine 5'-triphosphate = cyclic pyranopterin phosphate + diphosphate. It participates in cofactor biosynthesis; molybdopterin biosynthesis. In terms of biological role, catalyzes the conversion of (8S)-3',8-cyclo-7,8-dihydroguanosine 5'-triphosphate to cyclic pyranopterin monophosphate (cPMP). The sequence is that of Cyclic pyranopterin monophosphate synthase from Bacillus pumilus (strain SAFR-032).